We begin with the raw amino-acid sequence, 58 residues long: Small ribosomal subunit protein bS21 (58 aa).

Belongs to the bacterial ribosomal protein bS21 family.

The sequence is that of Small ribosomal subunit protein bS21 from Staphylococcus saprophyticus subsp. saprophyticus (strain ATCC 15305 / DSM 20229 / NCIMB 8711 / NCTC 7292 / S-41).